Reading from the N-terminus, the 237-residue chain is D-aminoacyl-tRNA deacylase (237 aa).

Belongs to the DtdA deacylase family. In terms of assembly, monomer. The cofactor is Zn(2+).

It carries out the reaction a D-aminoacyl-tRNA + H2O = a tRNA + a D-alpha-amino acid + H(+). It catalyses the reaction glycyl-tRNA(Ala) + H2O = tRNA(Ala) + glycine + H(+). In terms of biological role, D-aminoacyl-tRNA deacylase with broad substrate specificity. By recycling D-aminoacyl-tRNA to D-amino acids and free tRNA molecules, this enzyme counteracts the toxicity associated with the formation of D-aminoacyl-tRNA entities in vivo. This is D-aminoacyl-tRNA deacylase from Metallosphaera sedula (strain ATCC 51363 / DSM 5348 / JCM 9185 / NBRC 15509 / TH2).